The chain runs to 277 residues: Uridine phosphorylase (277 aa).

It belongs to the PNP/UDP phosphorylase family.

The protein resides in the cytoplasm. It catalyses the reaction uridine + phosphate = alpha-D-ribose 1-phosphate + uracil. Its pathway is pyrimidine metabolism; UMP biosynthesis via salvage pathway; uracil from uridine (phosphorylase route): step 1/1. Its function is as follows. Catalyzes the reversible phosphorylytic cleavage of uridine to uracil and ribose-1-phosphate. This is Uridine phosphorylase from Thermococcus kodakarensis (strain ATCC BAA-918 / JCM 12380 / KOD1) (Pyrococcus kodakaraensis (strain KOD1)).